Consider the following 421-residue polypeptide: Protein HOMOLOG OF MAMMALIAN LYST-INTERACTING PROTEIN 5 (421 aa).

Position 2 is an N-acetylserine (Ser-2). The tract at residues 146-374 (IKEGRKPTPG…KYHYDSSYQP (229 aa)) is disordered. Polar residues predominate over residues 165–185 (SIPSSGPSGSYDHSASDTNTT). Over residues 188–207 (HRTELDPPHDSNDDSSHHQF) the composition is skewed to basic and acidic residues. The segment covering 245 to 258 (LPPPTGPSDSPYPH) has biased composition (pro residues). The span at 278 to 293 (NYSSHEPSPNSLPNFQ) shows a compositional bias: polar residues. Composition is skewed to low complexity over residues 294–308 (SYPSFSESSLPSTSP) and 317–337 (PEPYYSSPHSAPAPSSTSFSS).

The protein belongs to the VTA1 family. As to quaternary structure, homodimer. Interacts with SKD1/VPS4, VPS60-1, CHMP1A and CHMP1B. Binds to PROS/At4g24370. Interacts with MPK6 and MPK3. Phosphorylated by activated MPK6 and MPK3, this activation is required to trigger multivesicular bodies (MVBs) trafficking upon plant infection.

The protein localises to the cytoplasm. It localises to the endosome membrane. Its subcellular location is the nucleus. The protein resides in the endosome. It is found in the multivesicular body. Functionally, involved in the endosomal multivesicular bodies (MVB) pathway. MVBs contain intraluminal vesicles (ILVs) that are generated by invagination and scission from the limiting membrane of the endosome and are delivered to lysosomes enabling degradation of membrane proteins. Thought to be a cofactor of SKD1/VPS4, which catalyzes the disassembly of membrane-associated ESCRT-III. Target of pathogen-responsive mitogen-activated protein kinases (MPKs) that plays a critical role in plant basal resistance to Pseudomonas syringae in a SKD1-dependent manner by promoting multivesicular bodies (MVBs) trafficking upon plant infection. This Arabidopsis thaliana (Mouse-ear cress) protein is Protein HOMOLOG OF MAMMALIAN LYST-INTERACTING PROTEIN 5.